Here is a 216-residue protein sequence, read N- to C-terminus: Somatotropin (216 aa).

Positions 1 to 25 (MAPGSWFSPLLIAVVTLGLPQGAAA) are cleaved as a signal peptide. Position 45 (His-45) interacts with Zn(2+). An intrachain disulfide couples Cys-78 to Cys-189. Residue Glu-198 coordinates Zn(2+). Cys-206 and Cys-214 are oxidised to a cystine.

It belongs to the somatotropin/prolactin family. Pituitary gland.

The protein localises to the secreted. Growth hormone plays an important role in growth control. This Meleagris gallopavo (Wild turkey) protein is Somatotropin (GH).